A 665-amino-acid polypeptide reads, in one-letter code: Methionine--tRNA ligase (665 aa).

A 'HIGH' region motif is present at residues 12 to 22; sequence YYPSGKLHIGS. A 'KMSKS' region motif is present at residues 308–312; that stretch reads KMSKS. K311 provides a ligand contact to ATP. Positions 562-665 constitute a tRNA-binding domain; the sequence is TFDAVEIRVA…SSVPNGSIIG (104 aa).

The protein belongs to the class-I aminoacyl-tRNA synthetase family. MetG type 2B subfamily. In terms of assembly, homodimer.

It is found in the cytoplasm. It carries out the reaction tRNA(Met) + L-methionine + ATP = L-methionyl-tRNA(Met) + AMP + diphosphate. Is required not only for elongation of protein synthesis but also for the initiation of all mRNA translation through initiator tRNA(fMet) aminoacylation. The sequence is that of Methionine--tRNA ligase (metG) from Streptococcus pyogenes serotype M1.